The sequence spans 275 residues: MTQALQALIDQAWEDRTSLSPKSAPNDIREAVANVIGQLDAGTLRVAEKQGKDWIVNQWVKKAVLLSFRLEDNAPMSAGGFAQFYDKVPTKFANWSGDDFAKAGFRVVPPAVARRGSFIAKNAVLMPSYVNIGAYVDEGTMVDTWATVGSCAQIGKNVHLSGGVGIGGVLEPLQANPVIIEDNCFIGARSEVVEGVIVEENSVISMGVYLGQSTKIYDRETGEIHYGRVPAGSVVVAGNLPSKDGKYSLYCAVIVKKVDAQTRAKTSLNDLLRGD.

It belongs to the transferase hexapeptide repeat family.

It localises to the cytoplasm. It catalyses the reaction (S)-2,3,4,5-tetrahydrodipicolinate + succinyl-CoA + H2O = (S)-2-succinylamino-6-oxoheptanedioate + CoA. The protein operates within amino-acid biosynthesis; L-lysine biosynthesis via DAP pathway; LL-2,6-diaminopimelate from (S)-tetrahydrodipicolinate (succinylase route): step 1/3. The chain is 2,3,4,5-tetrahydropyridine-2,6-dicarboxylate N-succinyltransferase from Cupriavidus taiwanensis (strain DSM 17343 / BCRC 17206 / CCUG 44338 / CIP 107171 / LMG 19424 / R1) (Ralstonia taiwanensis (strain LMG 19424)).